The primary structure comprises 232 residues: Lipoarabinomannan carrier protein LprG (232 aa).

The signal sequence occupies residues 1–21; that stretch reads MQTRLTAILAAFLTAVALLAG. Cys22 carries N-palmitoyl cysteine lipidation. Cys22 carries the S-diacylglycerol cysteine lipid modification.

This sequence belongs to the LppX/LprAFG lipoprotein family. In terms of processing, modified by Lgt on Cys-22 with an S-linked diacylglyceral, signal peptide is removed by LspA, Cys-22 is further modifed with a fatty acid on its amino group by Lnt yielding a triacylated protein.

The protein resides in the cell inner membrane. Helps membrane protein MHAS_02168/C731_2106 (P55) transport triacylglycerides (TAG) across the inner cell membrane into the periplasm and probably ultimately to the outer membrane. Binds TAG in its hydrophobic cavity and transfers it between lipid bilayers. TAG probably regulates lipid metabolism and growth regulation and plays a structural role in the outer membrane. Also binds mannosides, lipoarabinomannan and lipomannan and various glycolipids in the same cavity. The lprG-MHAS_02167/C731_2107 operon complements the vancomycin sensitivity of an M.smegmatis knockout of the same operon. This is Lipoarabinomannan carrier protein LprG from Mycolicibacterium hassiacum (strain DSM 44199 / CIP 105218 / JCM 12690 / 3849) (Mycobacterium hassiacum).